The primary structure comprises 200 residues: Holliday junction resolvase RecU (200 aa).

Residues 1 to 25 are disordered; sequence MTIRYPNGKRYNQASQPHKTPIKKH. Mg(2+) is bound by residues Thr85, Asp87, Glu100, and Gln119.

This sequence belongs to the RecU family. Mg(2+) is required as a cofactor.

Its subcellular location is the cytoplasm. It catalyses the reaction Endonucleolytic cleavage at a junction such as a reciprocal single-stranded crossover between two homologous DNA duplexes (Holliday junction).. Its function is as follows. Endonuclease that resolves Holliday junction intermediates in genetic recombination. Cleaves mobile four-strand junctions by introducing symmetrical nicks in paired strands. Promotes annealing of linear ssDNA with homologous dsDNA. Required for DNA repair, homologous recombination and chromosome segregation. The sequence is that of Holliday junction resolvase RecU from Bacillus cereus (strain ZK / E33L).